The chain runs to 358 residues: S-adenosylmethionine:tRNA ribosyltransferase-isomerase (358 aa).

Belongs to the QueA family. Monomer.

Its subcellular location is the cytoplasm. The enzyme catalyses 7-aminomethyl-7-carbaguanosine(34) in tRNA + S-adenosyl-L-methionine = epoxyqueuosine(34) in tRNA + adenine + L-methionine + 2 H(+). The protein operates within tRNA modification; tRNA-queuosine biosynthesis. Functionally, transfers and isomerizes the ribose moiety from AdoMet to the 7-aminomethyl group of 7-deazaguanine (preQ1-tRNA) to give epoxyqueuosine (oQ-tRNA). This Rhodopseudomonas palustris (strain BisA53) protein is S-adenosylmethionine:tRNA ribosyltransferase-isomerase.